The sequence spans 440 residues: GTPase Der (440 aa).

EngA-type G domains are found at residues 4 to 168 (PIVA…NPED) and 177 to 352 (IKVA…NQNA). Residues 10–17 (GRPNVGKS), 57–61 (DTGGI), 120–123 (NKVD), 183–190 (GKPNVGKS), 230–234 (DTAGI), and 295–298 (NKWD) each bind GTP. A KH-like domain is found at 353–437 (MRIPTGALNE…PIRFILREKT (85 aa)).

Belongs to the TRAFAC class TrmE-Era-EngA-EngB-Septin-like GTPase superfamily. EngA (Der) GTPase family. Associates with the 50S ribosomal subunit.

In terms of biological role, GTPase that plays an essential role in the late steps of ribosome biogenesis. This chain is GTPase Der, found in Alkaliphilus oremlandii (strain OhILAs) (Clostridium oremlandii (strain OhILAs)).